The following is a 246-amino-acid chain: Pyridoxine 5'-phosphate synthase (246 aa).

3-amino-2-oxopropyl phosphate is bound at residue N12. Position 14 to 15 (14 to 15) interacts with 1-deoxy-D-xylulose 5-phosphate; sequence DH. R23 is a 3-amino-2-oxopropyl phosphate binding site. Catalysis depends on H48, which acts as the Proton acceptor. The 1-deoxy-D-xylulose 5-phosphate site is built by R50 and H55. The Proton acceptor role is filled by E75. T105 contributes to the 1-deoxy-D-xylulose 5-phosphate binding site. The active-site Proton donor is H196. 3-amino-2-oxopropyl phosphate-binding positions include G197 and 218-219; that span reads GH.

The protein belongs to the PNP synthase family. In terms of assembly, homooctamer; tetramer of dimers.

It is found in the cytoplasm. The catalysed reaction is 3-amino-2-oxopropyl phosphate + 1-deoxy-D-xylulose 5-phosphate = pyridoxine 5'-phosphate + phosphate + 2 H2O + H(+). Its pathway is cofactor biosynthesis; pyridoxine 5'-phosphate biosynthesis; pyridoxine 5'-phosphate from D-erythrose 4-phosphate: step 5/5. Functionally, catalyzes the complicated ring closure reaction between the two acyclic compounds 1-deoxy-D-xylulose-5-phosphate (DXP) and 3-amino-2-oxopropyl phosphate (1-amino-acetone-3-phosphate or AAP) to form pyridoxine 5'-phosphate (PNP) and inorganic phosphate. This is Pyridoxine 5'-phosphate synthase from Nitrosococcus oceani (strain ATCC 19707 / BCRC 17464 / JCM 30415 / NCIMB 11848 / C-107).